The following is a 459-amino-acid chain: tRNA-2-methylthio-N(6)-dimethylallyladenosine synthase (459 aa).

The MTTase N-terminal domain occupies 1–116 (MRAHLITYGC…IGKALETNER (116 aa)). [4Fe-4S] cluster is bound by residues C10, C46, C79, C148, C152, and C155. Residues 134–367 (PQGKLQAHLT…IAKQKEWSAR (234 aa)) form the Radical SAM core domain. A TRAM domain is found at 370-433 (AAKVGTIQEV…PHMLYGRLIG (64 aa)).

Belongs to the methylthiotransferase family. MiaB subfamily. As to quaternary structure, monomer. [4Fe-4S] cluster is required as a cofactor.

It is found in the cytoplasm. The catalysed reaction is N(6)-dimethylallyladenosine(37) in tRNA + (sulfur carrier)-SH + AH2 + 2 S-adenosyl-L-methionine = 2-methylsulfanyl-N(6)-dimethylallyladenosine(37) in tRNA + (sulfur carrier)-H + 5'-deoxyadenosine + L-methionine + A + S-adenosyl-L-homocysteine + 2 H(+). Its function is as follows. Catalyzes the methylthiolation of N6-(dimethylallyl)adenosine (i(6)A), leading to the formation of 2-methylthio-N6-(dimethylallyl)adenosine (ms(2)i(6)A) at position 37 in tRNAs that read codons beginning with uridine. The chain is tRNA-2-methylthio-N(6)-dimethylallyladenosine synthase from Deinococcus geothermalis (strain DSM 11300 / CIP 105573 / AG-3a).